A 369-amino-acid chain; its full sequence is 3-isopropylmalate dehydrogenase (369 aa).

77 to 90 (GPKWDDLPFDKKPE) provides a ligand contact to NAD(+). Residues Arg-97, Arg-107, Arg-135, and Asp-226 each contribute to the substrate site. The Mg(2+) site is built by Asp-226, Asp-250, and Asp-254. 289-301 (GSAPDIAGKDMAN) lines the NAD(+) pocket.

This sequence belongs to the isocitrate and isopropylmalate dehydrogenases family. LeuB type 1 subfamily. In terms of assembly, homodimer. It depends on Mg(2+) as a cofactor. Mn(2+) serves as cofactor.

Its subcellular location is the cytoplasm. It carries out the reaction (2R,3S)-3-isopropylmalate + NAD(+) = 4-methyl-2-oxopentanoate + CO2 + NADH. It functions in the pathway amino-acid biosynthesis; L-leucine biosynthesis; L-leucine from 3-methyl-2-oxobutanoate: step 3/4. In terms of biological role, catalyzes the oxidation of 3-carboxy-2-hydroxy-4-methylpentanoate (3-isopropylmalate) to 3-carboxy-4-methyl-2-oxopentanoate. The product decarboxylates to 4-methyl-2 oxopentanoate. The protein is 3-isopropylmalate dehydrogenase of Paramagnetospirillum magneticum (strain ATCC 700264 / AMB-1) (Magnetospirillum magneticum).